Consider the following 92-residue polypeptide: Small ribosomal subunit protein uS19c (92 aa).

It belongs to the universal ribosomal protein uS19 family.

It is found in the plastid. Protein S19 forms a complex with S13 that binds strongly to the 16S ribosomal RNA. In Cuscuta reflexa (Southern Asian dodder), this protein is Small ribosomal subunit protein uS19c.